The following is a 113-amino-acid chain: Hydrogenase maturation factor HypA (113 aa).

Residue histidine 2 participates in Ni(2+) binding. The Zn(2+) site is built by cysteine 73, cysteine 76, cysteine 89, and cysteine 92.

The protein belongs to the HypA/HybF family.

Functionally, involved in the maturation of [NiFe] hydrogenases. Required for nickel insertion into the metal center of the hydrogenase. The protein is Hydrogenase maturation factor HypA of Xanthobacter autotrophicus (strain ATCC BAA-1158 / Py2).